The primary structure comprises 509 residues: Aspartyl/glutamyl-tRNA(Asn/Gln) amidotransferase subunit B (509 aa).

The protein belongs to the GatB/GatE family. GatB subfamily. As to quaternary structure, heterotrimer of A, B and C subunits.

The enzyme catalyses L-glutamyl-tRNA(Gln) + L-glutamine + ATP + H2O = L-glutaminyl-tRNA(Gln) + L-glutamate + ADP + phosphate + H(+). The catalysed reaction is L-aspartyl-tRNA(Asn) + L-glutamine + ATP + H2O = L-asparaginyl-tRNA(Asn) + L-glutamate + ADP + phosphate + 2 H(+). In terms of biological role, allows the formation of correctly charged Asn-tRNA(Asn) or Gln-tRNA(Gln) through the transamidation of misacylated Asp-tRNA(Asn) or Glu-tRNA(Gln) in organisms which lack either or both of asparaginyl-tRNA or glutaminyl-tRNA synthetases. The reaction takes place in the presence of glutamine and ATP through an activated phospho-Asp-tRNA(Asn) or phospho-Glu-tRNA(Gln). This chain is Aspartyl/glutamyl-tRNA(Asn/Gln) amidotransferase subunit B, found in Psychrobacter arcticus (strain DSM 17307 / VKM B-2377 / 273-4).